Here is a 532-residue protein sequence, read N- to C-terminus: Intercellular adhesion molecule 1 (532 aa).

The N-terminal stretch at 1 to 27 is a signal peptide; sequence MAPSSPRPALPALLVLLGALFPGPGNA. At 28–480 the chain is on the extracellular side; the sequence is QTSVSPPKVI…TVNVLSPRYE (453 aa). 2 consecutive Ig-like C2-type domains span residues 41-103 and 128-193; these read GGSV…QSTA and GKDL…LDLR. Disulfide bonds link Cys-48/Cys-92, Cys-52/Cys-96, and Cys-135/Cys-186. Asn-145 carries N-linked (GlcNAc...) asparagine glycosylation. Positions 152–154 match the Cell attachment site; atypical motif; sequence RGE. Residues Asn-183, Asn-202, Asn-267, and Asn-296 are each glycosylated (N-linked (GlcNAc...) asparagine). 2 Ig-like C2-type domains span residues 230–297 and 325–378; these read DTQG…LGNQ and GTEV…LEVA. The cysteines at positions 237 and 290 are disulfide-linked. An intrachain disulfide couples Cys-332 to Cys-371. 2 N-linked (GlcNAc...) asparagine glycosylation sites follow: Asn-385 and Asn-406. Cystine bridges form between Cys-403–Cys-419, Cys-419–Cys-457, and Cys-431–Cys-457. The Ig-like C2-type 5 domain maps to 412–464; the sequence is NSQQTPMCQASGNPLPELKCLKDGTFPLPVGESVTVTRDLEGTYLCRARSTQG. A helical membrane pass occupies residues 481 to 503; sequence IVIITVVAAAVIMGTAGLSTYLY. Residues 504 to 532 are Cytoplasmic-facing; that stretch reads NRQRKIRKYRLQQAQKGTPMKPNTQATPP. Phosphothreonine occurs at positions 521 and 530.

This sequence belongs to the immunoglobulin superfamily. ICAM family. Homodimer. Interacts with MUC1 and promotes cell aggregation in epithelial cells. Interacts with ARHGEF26/SGEF. Interacts (on T cell side) with CD81, CD247 and CD9 at immunological synapses between antigen-presenting cells and T cells. Monoubiquitinated, which is promoted by MARCH9 and leads to endocytosis.

It localises to the membrane. ICAM proteins are ligands for the leukocyte adhesion protein LFA-1 (integrin alpha-L/beta-2). During leukocyte trans-endothelial migration, ICAM1 engagement promotes the assembly of endothelial apical cups through ARHGEF26/SGEF and RHOG activation. This Pan paniscus (Pygmy chimpanzee) protein is Intercellular adhesion molecule 1 (ICAM1).